An 86-amino-acid polypeptide reads, in one-letter code: Small ribosomal subunit protein bS16 (86 aa).

This sequence belongs to the bacterial ribosomal protein bS16 family.

This chain is Small ribosomal subunit protein bS16, found in Methylibium petroleiphilum (strain ATCC BAA-1232 / LMG 22953 / PM1).